The following is an 80-amino-acid chain: Exodeoxyribonuclease 7 small subunit (80 aa).

This sequence belongs to the XseB family. In terms of assembly, heterooligomer composed of large and small subunits.

It localises to the cytoplasm. The enzyme catalyses Exonucleolytic cleavage in either 5'- to 3'- or 3'- to 5'-direction to yield nucleoside 5'-phosphates.. Bidirectionally degrades single-stranded DNA into large acid-insoluble oligonucleotides, which are then degraded further into small acid-soluble oligonucleotides. This chain is Exodeoxyribonuclease 7 small subunit, found in Salmonella paratyphi B (strain ATCC BAA-1250 / SPB7).